Reading from the N-terminus, the 303-residue chain is Diaminopimelate epimerase (303 aa).

Positions 15, 47, and 67 each coordinate substrate. The active-site Proton donor is the Cys-76. Substrate is bound by residues 77-78, Asn-163, Asn-197, and 215-216; these read GN and ER. Residue Cys-224 is the Proton acceptor of the active site. 225–226 is a binding site for substrate; it reads GS. Positions 278–303 are disordered; the sequence is FDPATGEWSRDTQGLQGSGNADRGAA.

This sequence belongs to the diaminopimelate epimerase family. As to quaternary structure, homodimer.

The protein localises to the cytoplasm. It catalyses the reaction (2S,6S)-2,6-diaminopimelate = meso-2,6-diaminopimelate. The protein operates within amino-acid biosynthesis; L-lysine biosynthesis via DAP pathway; DL-2,6-diaminopimelate from LL-2,6-diaminopimelate: step 1/1. Catalyzes the stereoinversion of LL-2,6-diaminopimelate (L,L-DAP) to meso-diaminopimelate (meso-DAP), a precursor of L-lysine and an essential component of the bacterial peptidoglycan. This chain is Diaminopimelate epimerase, found in Brucella melitensis biotype 1 (strain ATCC 23456 / CCUG 17765 / NCTC 10094 / 16M).